The chain runs to 498 residues: MSGQNQGNCEETYSTSTHEYANADSTDWFADMFADFEPQNTTDGSYRGTMAKIKATELQYQAVFEQKLVEANTNLKRERIRVSIKQTGNSLQLRATLPLKPGDGSLGKTKKQYDLSLGIPANLEGLKTAIEESYELGKLIARHTFEWNEKYLGIKSREKQEIKTIGELLDKFEEKYYQTRQKTITSQNTFPNYISVIKRNFPLTHLATKENFEEIINSVQGNKKNELIAVTSVFIKTFNLGFQLDVKRDNVTPAHREIPEDDKIIYSFDLFEKFALNRKNTNISDEIDTWEMWRWVYGMLATFGLRPRELFVQPDINWWMSPQNLDHTWKVNKNTKTGYREVIPFVPEWIELFDLKNPKPLKILEKKVTKIASVQNINWMRRDISRWFRKVGIEFQPYDLRHACAIRAHLQGIPIKAAADNLGHTVDEHTKTYQRWFGIENRKKAFGEVISQKSLIELQKNEILALRMENERLRLEVEKLKFSTTKNPEDCEQLYHQG.

Residues 263 to 446 form the Tyr recombinase domain; sequence KIIYSFDLFE…FGIENRKKAF (184 aa). Active-site residues include Arg-306, Lys-336, Arg-401, and His-424. Tyr-433 serves as the catalytic O-(3'-phospho-DNA)-tyrosine intermediate.

The protein belongs to the XisA/XisC recombinase family.

Its function is as follows. Essential for DNA excision. Site specific recombinase necessary for the excision of the 10.5 kb hupL element during heterocyst differentiation. In Nostoc sp. (strain PCC 7120 / SAG 25.82 / UTEX 2576), this protein is Excisase C (xisC).